Consider the following 538-residue polypeptide: NADH-quinone oxidoreductase subunit N (538 aa).

Transmembrane regions (helical) follow at residues 28–48 (LAPV…EAFV), 57–77 (QIIV…TTIA), 94–114 (PTLA…VLFA), 147–167 (HTEV…FAAA), 170–190 (LIMM…LCGM), 206–226 (FLLG…LYGC), 249–269 (IVAG…AVPF), 288–308 (MAVA…YVGL), 315–335 (WQIV…IVGL), 343–363 (LLAY…VGAW), 380–400 (VLVY…LILM), 424–444 (IGVL…TAGF), 458–478 (GYAW…AFYL), and 503–523 (IAGW…GVAP).

It belongs to the complex I subunit 2 family. NDH-1 is composed of 14 different subunits. Subunits NuoA, H, J, K, L, M, N constitute the membrane sector of the complex.

It is found in the cell membrane. The catalysed reaction is a quinone + NADH + 5 H(+)(in) = a quinol + NAD(+) + 4 H(+)(out). Functionally, NDH-1 shuttles electrons from NADH, via FMN and iron-sulfur (Fe-S) centers, to quinones in the respiratory chain. The immediate electron acceptor for the enzyme in this species is believed to be a menaquinone. Couples the redox reaction to proton translocation (for every two electrons transferred, four hydrogen ions are translocated across the cytoplasmic membrane), and thus conserves the redox energy in a proton gradient. The polypeptide is NADH-quinone oxidoreductase subunit N (Cutibacterium acnes (strain DSM 16379 / KPA171202) (Propionibacterium acnes)).